The primary structure comprises 70 residues: Movement protein TGBp3 (70 aa).

Over 1–6 (MEANTY) the chain is Lumenal. Residues 7–27 (LNAIILVLVVTIIAVISTSLV) traverse the membrane as a helical segment. The Cytoplasmic portion of the chain corresponds to 28-70 (RTEPCVIKITGESITVLACKLDAETIRAIADLKPLSVERLSFH).

It belongs to the Tymovirales TGBp3 protein family.

It is found in the host endoplasmic reticulum membrane. In terms of biological role, plays a role in viral cell-to-cell propagation, by facilitating genome transport to neighboring plant cells through plasmosdesmata. May induce the formation of granular vesicles derived from the Endoplasmic reticulum, which align on actin filaments. The sequence is that of Movement protein TGBp3 from Potato virus X (PVX).